A 368-amino-acid chain; its full sequence is Alanine racemase (368 aa).

Lys35 acts as the Proton acceptor; specific for D-alanine in catalysis. Lys35 carries the post-translational modification N6-(pyridoxal phosphate)lysine. Arg130 provides a ligand contact to substrate. The active-site Proton acceptor; specific for L-alanine is the Tyr253. Position 305 (Met305) interacts with substrate.

This sequence belongs to the alanine racemase family. The cofactor is pyridoxal 5'-phosphate.

It carries out the reaction L-alanine = D-alanine. Its pathway is amino-acid biosynthesis; D-alanine biosynthesis; D-alanine from L-alanine: step 1/1. Its function is as follows. Catalyzes the interconversion of L-alanine and D-alanine. May also act on other amino acids. The sequence is that of Alanine racemase (alr) from Cupriavidus metallidurans (strain ATCC 43123 / DSM 2839 / NBRC 102507 / CH34) (Ralstonia metallidurans).